A 441-amino-acid chain; its full sequence is UDP-N-acetylglucosamine--peptide N-acetylglucosaminyltransferase stabilizing protein GtfB (441 aa).

The protein belongs to the GtfB family. As to quaternary structure, forms a heterotetramer with 2 subunits each of GtfA and GtfB. Part of the accessory SecA2/SecY2 protein translocation apparatus.

Its subcellular location is the cell membrane. It participates in protein modification; protein glycosylation. Required for polymorphic O-glycosylation of the serine-rich repeat protein (SRRP) in this bacteria. A stabilizing protein that is part of the accessory SecA2/SecY2 system specifically required to export serine-rich repeat cell wall proteins encoded in the same operon. The GtfA-GtfB complex adds GlcNAc from UDP-GlcNAc to the substrate protein, attaching the first sugar residue. Stabilizes the glycosylation activity of GtfA. Has no N-acetylglucosaminyl transferase activity on its own. In Limosilactobacillus reuteri subsp. suis (strain ATCC 53608 / LMG 31752 / 1063) (Lactobacillus reuteri), this protein is UDP-N-acetylglucosamine--peptide N-acetylglucosaminyltransferase stabilizing protein GtfB.